A 548-amino-acid chain; its full sequence is Transcriptional adapter ADA2a (548 aa).

The segment at 1 to 30 (MGRSKLASRPAEEDLNPGKSKRKKISLGPE) is disordered. Residues 48–104 (PGLYCCNYCDKDLSGLVRFKCAVCMDFDLCVECFSVGVELNRHKNSHPYRVMDNLSF) form a ZZ-type zinc finger. Positions 53, 56, 68, 71, 77, 80, 90, and 94 each coordinate Zn(2+). An SANT domain is found at 106-158 (LVTSDWNADEEILLLEAIATYGFGNWKEVADHVGSKTTTECIKHFNSAYMQSP). Lys-257 is modified (N6-acetyllysine; by GCN5). Residues 365-386 (QSKEEHKELIKKVIEEHQILRR) adopt a coiled-coil conformation. The SWIRM domain maps to 461-548 (PRIYSGLDTW…LVHKGIGDST (88 aa)).

As to quaternary structure, interacts in vitro with the HAT domain of GCN5 and with the DNA-binding domain of the transcriptional activator DREB1B/CBF1. Acetylated in vitro by GCN5, but acetylation is not essential for biological activity. As to expression, expressed in roots and leaves.

It localises to the nucleus. In terms of biological role, required for the function of some acidic activation domains, which activate transcription from a distant site. The exact mechanism of action is not yet known. ADA2 stimulates the acetyltransferase activity of GCN5 on free histones or nucleosomes, probably by opening up the promoter region. This Arabidopsis thaliana (Mouse-ear cress) protein is Transcriptional adapter ADA2a (ADA2A).